The primary structure comprises 151 residues: UPF0208 membrane protein ECA3038 (151 aa).

The next 2 membrane-spanning stretches (helical) occupy residues 46 to 66 and 69 to 89; these read FGIR…IALG and LGPA…GLWW.

It belongs to the UPF0208 family.

Its subcellular location is the cell inner membrane. The polypeptide is UPF0208 membrane protein ECA3038 (Pectobacterium atrosepticum (strain SCRI 1043 / ATCC BAA-672) (Erwinia carotovora subsp. atroseptica)).